Consider the following 213-residue polypeptide: MSAKAALPLQMFGRRLVHLRSSVTSQNMSALRLYSTEKQPEEATEQKATESSPEVEKLTKELAAAKEQNAELMDKYKRSLADSENMRNRLNKQISDAKIFGIQSFCKDLLEVADTLGHATQAVPKDKLSGNADLKNLYEGLTMTRASLLQVFKRHGLEPLDPINQKFDPNQHEALFQKEDKTVEPNTVVEVTKLGYKLHERCIRPALVGVSKC.

The tract at residues 35–55 (STEKQPEEATEQKATESSPEV) is disordered. Residues 38 to 55 (KQPEEATEQKATESSPEV) are compositionally biased toward basic and acidic residues.

It belongs to the GrpE family. Probable component of the PAM complex at least composed of a mitochondrial HSP70 protein, Roe1, TIM44, blp/TIM16 and TIM14.

It localises to the mitochondrion matrix. In terms of biological role, essential component of the PAM complex, a complex required for the translocation of transit peptide-containing proteins from the inner membrane into the mitochondrial matrix in an ATP-dependent manner. Seems to control the nucleotide-dependent binding of mitochondrial HSP70 to substrate proteins. This Drosophila melanogaster (Fruit fly) protein is GrpE protein homolog, mitochondrial (Roe1).